Reading from the N-terminus, the 489-residue chain is Betaine aldehyde dehydrogenase (489 aa).

K(+)-binding residues include threonine 26 and aspartate 93. 150–152 (GAW) is a binding site for NAD(+). The Charge relay system role is filled by lysine 162. Position 176-179 (176-179 (KPSE)) interacts with NAD(+). Residue valine 180 participates in K(+) binding. Position 229–232 (229–232 (GVET)) interacts with NAD(+). Residue leucine 245 coordinates K(+). The active-site Proton acceptor is glutamate 251. NAD(+) contacts are provided by glycine 253, cysteine 285, and glutamate 386. The Nucleophile role is filled by cysteine 285. A Cysteine sulfenic acid (-SOH) modification is found at cysteine 285. Residues lysine 456 and glycine 459 each contribute to the K(+) site. Glutamate 463 (charge relay system) is an active-site residue.

It belongs to the aldehyde dehydrogenase family. Dimer of dimers. The cofactor is K(+).

The catalysed reaction is betaine aldehyde + NAD(+) + H2O = glycine betaine + NADH + 2 H(+). The protein operates within amine and polyamine biosynthesis; betaine biosynthesis via choline pathway; betaine from betaine aldehyde: step 1/1. Its function is as follows. Involved in the biosynthesis of the osmoprotectant glycine betaine. Catalyzes the irreversible oxidation of betaine aldehyde to the corresponding acid. The protein is Betaine aldehyde dehydrogenase of Burkholderia pseudomallei (strain K96243).